The sequence spans 1023 residues: 1-phosphatidylinositol 4,5-bisphosphate phosphodiesterase beta-4 (1023 aa).

In terms of domain architecture, PI-PLC X-box spans 149–299; sequence QEMDHPLAHY…LKRKILIKKQ (151 aa). Residues histidine 164 and histidine 211 contribute to the active site. The PI-PLC Y-box domain occupies 413–529; sequence LSTMINYAQP…GYLLKPDFMR (117 aa). One can recognise a C2 domain in the interval 532-657; sequence DRTFDPFSET…SLRNEGNKPL (126 aa). Disordered stretches follow at residues 711–742 and 930–958; these read ADVP…SELR and KISM…VREL. Composition is skewed to polar residues over residues 729–742 and 933–942; these read AKAN…SELR and MENSKAISQD. Position 734 is a phosphothreonine (threonine 734). The span at 943 to 957 shows a compositional bias: basic and acidic residues; it reads KSIKNKAERERRVRE.

The cofactor is Ca(2+). The N-terminus is blocked. In terms of tissue distribution, preferentially expressed in the retina.

It localises to the cell membrane. It carries out the reaction a 1,2-diacyl-sn-glycero-3-phospho-(1D-myo-inositol-4,5-bisphosphate) + H2O = 1D-myo-inositol 1,4,5-trisphosphate + a 1,2-diacyl-sn-glycerol + H(+). The catalysed reaction is a 1,2-diacyl-sn-glycero-3-phospho-(1D-myo-inositol) + H2O = 1D-myo-inositol 1-phosphate + a 1,2-diacyl-sn-glycerol + H(+). Activated phosphatidylinositol-specific phospholipase C enzymes catalyze the production of the second messenger molecules diacylglycerol (DAG) and inositol 1,4,5-trisphosphate (IP3) involved in G-protein coupled receptor signaling pathways. PLCB4 is a direct effector of the endothelin receptor signaling pathway that plays an essential role in lower jaw and middle ear structures development. The sequence is that of 1-phosphatidylinositol 4,5-bisphosphate phosphodiesterase beta-4 (PLCB4) from Bos taurus (Bovine).